We begin with the raw amino-acid sequence, 168 residues long: Putative defense protein 1 (168 aa).

The first 18 residues, 1-18 (MMFAYIVAVVSALALTSA), serve as a signal peptide directing secretion. In terms of domain architecture, Reelin spans 19 to 168 (FPTGAPRSAC…SAPVKILSHH (150 aa)). Cysteine 28 and cysteine 105 are oxidised to a cystine.

Belongs to the insect defense protein family. Very highly expressed in midgut, and highly expressed in fat body, silk gland and epidermis.

It is found in the secreted. In terms of biological role, as this protein is expressed upon bacterial infection, it may have antimicrobial activity. This Antheraea mylitta (Tasar silkworm) protein is Putative defense protein 1.